Reading from the N-terminus, the 268-residue chain is Sexual development regulator velC (268 aa).

A compositionally biased stretch (basic and acidic residues) spans 1 to 13 (MPHGFDKLLHPEP). 2 disordered regions span residues 1 to 124 (MPHG…DNFS) and 142 to 165 (DPDP…NPPH). A compositionally biased stretch (pro residues) spans 14 to 26 (EPQSPSPPPPPRR). Residues 28-257 (STQSRYHLHI…ELGFVELKTR (230 aa)) form the Velvet domain. Residues 92 to 121 (DGNRDREREREHERERERERETDGVARTDD) show a composition bias toward basic and acidic residues.

The protein belongs to the velvet family. VelC subfamily. As to quaternary structure, interacts with velA and vosA.

Its subcellular location is the nucleus. In terms of biological role, velvet-domain-containing protein that acts as a positive regulator of sexual development. The chain is Sexual development regulator velC from Penicillium rubens (strain ATCC 28089 / DSM 1075 / NRRL 1951 / Wisconsin 54-1255) (Penicillium chrysogenum).